A 704-amino-acid chain; its full sequence is Inhibitor of carbonic anhydrase (704 aa).

A signal peptide spans 1–19; it reads MRLAFCVLLCAGSLGLCLA. Transferrin-like domains are found at residues 25-347 and 357-689; these read VRWC…HLRR and VMWC…NVRQ. 16 disulfide bridges follow: C28–C67, C38–C58, C137–C213, C172–C188, C175–C196, C185–C198, C246–C260, C360–C392, C370–C383, C417–C699, C440–C662, C472–C549, C496–C690, C506–C520, C517–C532, and C589–C603. N-linked (GlcNAc...) asparagine glycosylation is present at N491.

It belongs to the transferrin family. Monomer. Interacts (via transferrin-like domain 2) with CA2. Post-translationally, N-glycosylated. Blood plasma (at protein level).

It localises to the secreted. Functionally, inhibitor for carbonic anhydrase 2 (CA2). Does not bind iron ions. This Sus scrofa (Pig) protein is Inhibitor of carbonic anhydrase.